The primary structure comprises 259 residues: Malonyl-[acyl-carrier protein] O-methyltransferase (259 aa).

This sequence belongs to the methyltransferase superfamily.

It catalyses the reaction malonyl-[ACP] + S-adenosyl-L-methionine = malonyl-[ACP] methyl ester + S-adenosyl-L-homocysteine. It functions in the pathway cofactor biosynthesis; biotin biosynthesis. In terms of biological role, converts the free carboxyl group of a malonyl-thioester to its methyl ester by transfer of a methyl group from S-adenosyl-L-methionine (SAM). It allows to synthesize pimeloyl-ACP via the fatty acid synthetic pathway. This is Malonyl-[acyl-carrier protein] O-methyltransferase from Anoxybacillus flavithermus (strain DSM 21510 / WK1).